The following is a 204-amino-acid chain: High frequency lysogenization protein HflD homolog (204 aa).

The protein belongs to the HflD family.

It is found in the cytoplasm. Its subcellular location is the cell inner membrane. The protein is High frequency lysogenization protein HflD homolog of Xanthomonas euvesicatoria pv. vesicatoria (strain 85-10) (Xanthomonas campestris pv. vesicatoria).